The primary structure comprises 95 residues: Small ribosomal subunit protein bS18 (95 aa).

It belongs to the bacterial ribosomal protein bS18 family. As to quaternary structure, part of the 30S ribosomal subunit. Forms a tight heterodimer with protein bS6.

Functionally, binds as a heterodimer with protein bS6 to the central domain of the 16S rRNA, where it helps stabilize the platform of the 30S subunit. This Rickettsia akari (strain Hartford) protein is Small ribosomal subunit protein bS18.